The primary structure comprises 1014 residues: 2-oxoglutarate dehydrogenase, mitochondrial (1014 aa).

The N-terminal 30 residues, 1–30 (MLRFVSSQTCRYSSRGLLKTSLLKNASTVK), are a transit peptide targeting the mitochondrion. Residues Arg-306, Asp-406, Asn-439, and Ile-441 each coordinate thiamine diphosphate. Residues Asp-406, Asn-439, and Ile-441 each coordinate Mg(2+).

It belongs to the alpha-ketoglutarate dehydrogenase family. In terms of assembly, component of the 2-oxoglutarate dehydrogenase complex (OGDC), also called alpha-ketoglutarate dehydrogenase (KGDH) complex. The copmplex is composed of the catalytic subunits OGDH (2-oxoglutarate dehydrogenase KGD1; also called E1 subunit), DLST (dihydrolipoamide succinyltransferase KGD2; also called E2 subunit) and DLD (dihydrolipoamide dehydrogenase LPD1; also called E3 subunit), and the assembly factor KGD4. It depends on thiamine diphosphate as a cofactor. Mg(2+) is required as a cofactor.

The protein localises to the mitochondrion. It is found in the mitochondrion matrix. It localises to the mitochondrion nucleoid. The enzyme catalyses N(6)-[(R)-lipoyl]-L-lysyl-[protein] + 2-oxoglutarate + H(+) = N(6)-[(R)-S(8)-succinyldihydrolipoyl]-L-lysyl-[protein] + CO2. Its activity is regulated as follows. Catabolite repressed. Functionally, the 2-oxoglutarate dehydrogenase complex catalyzes the overall conversion of 2-oxoglutarate to succinyl-CoA and CO(2). It contains multiple copies of three enzymatic components: 2-oxoglutarate dehydrogenase (E1), dihydrolipoamide succinyltransferase (E2) and lipoamide dehydrogenase (E3). This is 2-oxoglutarate dehydrogenase, mitochondrial (KGD1) from Saccharomyces cerevisiae (strain ATCC 204508 / S288c) (Baker's yeast).